The sequence spans 913 residues: Translation initiation factor IF-2 (913 aa).

The disordered stretch occupies residues 1–322 (MTDNNDDKTL…QEKFRRSQMQ (322 aa)). Low complexity predominate over residues 60-113 (VQPVVAAPKPAAPAPVAARPQAPQPRIHQPGGQQQRPGSSQSQQRSGSSAPQQR). The span at 131 to 180 (MEARRRALMEAQARDVVEAKQRAEDEARRKVEEEQRIAAEKMEAANRAAE) shows a compositional bias: basic and acidic residues. Composition is skewed to low complexity over residues 181-195 (EAAA…PAAE), 203-238 (ERPA…AAAP), and 261-277 (PARG…PAAR). The region spanning 411–578 (SRPPVVTIMG…AILLQAEILD (168 aa)) is the tr-type G domain. A G1 region spans residues 420-427 (GHVDHGKT). Residue 420-427 (GHVDHGKT) participates in GTP binding. Positions 445–449 (GITQH) are G2. Positions 466 to 469 (DTPG) are G3. GTP contacts are provided by residues 466–470 (DTPGH) and 520–523 (NKID). Positions 520–523 (NKID) are G4. Residues 556–558 (SAK) form a G5 region.

Belongs to the TRAFAC class translation factor GTPase superfamily. Classic translation factor GTPase family. IF-2 subfamily.

It is found in the cytoplasm. Functionally, one of the essential components for the initiation of protein synthesis. Protects formylmethionyl-tRNA from spontaneous hydrolysis and promotes its binding to the 30S ribosomal subunits. Also involved in the hydrolysis of GTP during the formation of the 70S ribosomal complex. This is Translation initiation factor IF-2 from Agrobacterium fabrum (strain C58 / ATCC 33970) (Agrobacterium tumefaciens (strain C58)).